The chain runs to 208 residues: Guanylate kinase (208 aa).

The Guanylate kinase-like domain maps to 4 to 185; sequence GNLYILSAPS…ALADLVHILR (182 aa). ATP is bound at residue 11-18; that stretch reads APSGAGKS.

This sequence belongs to the guanylate kinase family.

The protein resides in the cytoplasm. It carries out the reaction GMP + ATP = GDP + ADP. In terms of biological role, essential for recycling GMP and indirectly, cGMP. In Mannheimia succiniciproducens (strain KCTC 0769BP / MBEL55E), this protein is Guanylate kinase.